The following is a 37-amino-acid chain: Large ribosomal subunit protein bL36 (37 aa).

It belongs to the bacterial ribosomal protein bL36 family.

The polypeptide is Large ribosomal subunit protein bL36 (Mycobacterium leprae (strain Br4923)).